The primary structure comprises 639 residues: C-type lectin domain-containing protein 160 (639 aa).

An N-terminal signal peptide occupies residues 1-19 (MDLKSWILLSCTLLPLSVT). 2 consecutive VWFA domains span residues 31-178 (DIII…VGIG) and 289-474 (DIIF…LCQV). In terms of domain architecture, C-type lectin spans 491-618 (KYGECFFPTK…WNSVSCTSEY (128 aa)). A disulfide bridge connects residues Cys-594 and Cys-614.

The protein localises to the secreted. This Caenorhabditis elegans protein is C-type lectin domain-containing protein 160 (clec-160).